A 289-amino-acid chain; its full sequence is Aquaporin PIP1-1 (289 aa).

A disordered region spans residues 1–36; that stretch reads MEGKEEDVRLGANRYSERQPIGTAAQGAGDDKDYKE. The next 2 helical transmembrane spans lie at 58 to 78 and 93 to 115; these read IAEF…VMGV and IAWS…SGGH. The NPA 1 signature appears at 117 to 119; the sequence is NPA. 3 helical membrane passes run 136-156, 178-198, and 212-232; these read IFYI…VKGF, GDGL…VFSA, and ILAP…TIPI. An NPA 2 motif is present at residues 238 to 240; that stretch reads NPA. A helical membrane pass occupies residues 260-280; the sequence is IFWVGPFVGAALAAIYHQVII.

This sequence belongs to the MIP/aquaporin (TC 1.A.8) family. PIP (TC 1.A.8.11) subfamily. In terms of tissue distribution, expressed in roots, leaves and anthers.

It is found in the cell membrane. In terms of biological role, may function as water channel to facilitate the transport of water across cell membrane. This is Aquaporin PIP1-1 (PIP1-1) from Oryza sativa subsp. japonica (Rice).